Consider the following 618-residue polypeptide: Alpha-dioxygenase PIOX (618 aa).

His-157 functions as the Proton acceptor in the catalytic mechanism. Asp-158 lines the Ca(2+) pocket. His-162 lines the heme b pocket. Residues Thr-210, Trp-212, Asp-214, and Ser-216 each contribute to the Ca(2+) site. His-311 provides a ligand contact to hexadecanoate. Residues His-382, Arg-479, and Arg-483 each contribute to the heme b site. Glu-599 contacts hexadecanoate.

This sequence belongs to the peroxidase family. The cofactor is heme b. Ca(2+) is required as a cofactor.

It catalyses the reaction a 1,2-saturated fatty acid + O2 = a (2R)-2-hydroperoxy fatty acid. The catalysed reaction is (9Z,12Z)-octadecadienoate + O2 = (2R,9Z,12Z)-2-hydroperoxyoctadecadienoate. The enzyme catalyses hexadecanoate + O2 = (2R)-2-hydroperoxyhexadecanoate. It carries out the reaction (9Z,12Z,15Z)-octadecatrienoate + O2 = (R)-2-hydroperoxy-(9Z,12Z,15Z)-octadecatrienoate. It catalyses the reaction tetradecanoate + O2 = (2R)-2-hydroperoxytetradecanoate. The catalysed reaction is octadecanoate + O2 = (2R)-2-hydroperoxyoctadecanoate. The enzyme catalyses (9Z)-octadecenoate + O2 = (2R,9Z)-2-hydroperoxyoctadecenoate. Its function is as follows. Alpha-dioxygenase that catalyzes the primary oxygenation step of a variety of 14-20 carbon fatty acids, containing up to three unsaturated bonds, into their corresponding 2R-hydroperoxides. Involved in the production of oxylipins that function in cell signaling, wound healing, and protection from infection. In Oryza sativa subsp. japonica (Rice), this protein is Alpha-dioxygenase PIOX.